We begin with the raw amino-acid sequence, 62 residues long: UPF0434 protein NGR_c31900 (62 aa).

Belongs to the UPF0434 family.

The sequence is that of UPF0434 protein NGR_c31900 from Sinorhizobium fredii (strain NBRC 101917 / NGR234).